We begin with the raw amino-acid sequence, 380 residues long: Cytochrome b (380 aa).

4 consecutive transmembrane segments (helical) span residues 34–54, 78–99, 114–134, and 179–199; these read FGSL…LLAA, WLIR…YMHV, WNTG…GYVL, and FFTL…IHLT. Positions 84 and 98 each coordinate heme b. 2 residues coordinate heme b: His-183 and His-197. Residue His-202 coordinates a ubiquinone. Transmembrane regions (helical) follow at residues 227–247, 289–309, 321–341, and 348–368; these read LKDI…ALFS, LGGV…PLLH, LSQL…WVGS, and FMII…ILFP.

The protein belongs to the cytochrome b family. In terms of assembly, the cytochrome bc1 complex contains 11 subunits: 3 respiratory subunits (MT-CYB, CYC1 and UQCRFS1), 2 core proteins (UQCRC1 and UQCRC2) and 6 low-molecular weight proteins (UQCRH/QCR6, UQCRB/QCR7, UQCRQ/QCR8, UQCR10/QCR9, UQCR11/QCR10 and a cleavage product of UQCRFS1). This cytochrome bc1 complex then forms a dimer. Heme b serves as cofactor.

It localises to the mitochondrion inner membrane. Component of the ubiquinol-cytochrome c reductase complex (complex III or cytochrome b-c1 complex) that is part of the mitochondrial respiratory chain. The b-c1 complex mediates electron transfer from ubiquinol to cytochrome c. Contributes to the generation of a proton gradient across the mitochondrial membrane that is then used for ATP synthesis. The sequence is that of Cytochrome b (MT-CYB) from Balearica pavonina (Black crowned-crane).